A 103-amino-acid polypeptide reads, in one-letter code: Carboxysome shell protein CcmK2 (103 aa).

The region spanning 4 to 90 is the BMC domain; that stretch reads AVGMIETRGF…PHENLEYVLP (87 aa).

Belongs to the bacterial microcompartments protein family. CcmK subfamily. As to quaternary structure, homohexamer, might also make dodecamers. Interacts with full-length CcmM. Forms mixed heterohexamers of all possible stoichiometries with CcmK1, which might form dodecamers. Only very weak interactions with CcmK3 and CcmK4 were seen.

Its subcellular location is the carboxysome. In terms of biological role, one of the shell proteins of the carboxysome, a polyhedral inclusion where RuBisCO (ribulose bisphosphate carboxylase, rbcL-rbcS) is sequestered. The central pore probably regulates metabolite flux. Hexamers make sheets that form the facets of the polyhedral carboxysome. The polypeptide is Carboxysome shell protein CcmK2 (Synechocystis sp. (strain ATCC 27184 / PCC 6803 / Kazusa)).